The primary structure comprises 21 residues: EDHPVHNRGEYSVCDSVNVWV.

It belongs to the NGF-beta family. As to quaternary structure, homodimer; non-covalently linked. Post-translationally, glycosylated. As to expression, expressed by the venom gland.

It localises to the secreted. Functionally, nerve growth factor is important for the development and maintenance of the sympathetic and sensory nervous systems. It stimulates division and differentiation of sympathetic and embryonic sensory neurons as well as basal forebrain cholinergic neurons in the brain. Its relevance in the snake venom is not clear. However, it has been shown to inhibit metalloproteinase-dependent proteolysis of platelet glycoprotein Ib alpha, suggesting a metalloproteinase inhibition to prevent metalloprotease autodigestion and/or protection against prey proteases. Binds a lipid between the two protein chains in the homodimer. The lipid-bound form promotes histamine relase from mouse mast cells, contrary to the lipid-free form. The polypeptide is Venom nerve growth factor Bco12 (Bothrops cotiara (Cotiara)).